Here is a 306-residue protein sequence, read N- to C-terminus: Sulfate adenylyltransferase subunit 2 (306 aa).

The protein belongs to the PAPS reductase family. CysD subfamily. In terms of assembly, heterodimer composed of CysD, the smaller subunit, and CysN.

It carries out the reaction sulfate + ATP + H(+) = adenosine 5'-phosphosulfate + diphosphate. It functions in the pathway sulfur metabolism; hydrogen sulfide biosynthesis; sulfite from sulfate: step 1/3. With CysN forms the ATP sulfurylase (ATPS) that catalyzes the adenylation of sulfate producing adenosine 5'-phosphosulfate (APS) and diphosphate, the first enzymatic step in sulfur assimilation pathway. APS synthesis involves the formation of a high-energy phosphoric-sulfuric acid anhydride bond driven by GTP hydrolysis by CysN coupled to ATP hydrolysis by CysD. The protein is Sulfate adenylyltransferase subunit 2 of Brucella anthropi (strain ATCC 49188 / DSM 6882 / CCUG 24695 / JCM 21032 / LMG 3331 / NBRC 15819 / NCTC 12168 / Alc 37) (Ochrobactrum anthropi).